The sequence spans 160 residues: Leucokinin (160 aa).

A signal peptide spans M1–G19. Residues A20–E130 constitute a propeptide that is removed on maturation. A Glycine amide modification is found at G147. A propeptide spanning residues S151 to Y160 is cleaved from the precursor.

Its subcellular location is the secreted. Functionally, acts through intracellular calcium in Malpighian tubule stellate cells to raise chloride conductance. This chain is Leucokinin (Lk), found in Drosophila melanogaster (Fruit fly).